A 328-amino-acid chain; its full sequence is 5'-AMP-activated protein kinase subunit gamma (328 aa).

CBS domains follow at residues 42 to 103, 123 to 186, 199 to 259, and 268 to 328; these read VSYR…PDKF, IQPY…CKEI, ISTN…YNDL, and MRRS…FAES. ADP is bound by residues isoleucine 47, arginine 150, arginine 151, 171 to 174, 227 to 228, and 297 to 299; these read TQYR, SS, and RVH. An AMP-binding site is contributed by arginine 150. Arginine 150 lines the ATP pocket. 227–228 is an AMP binding site; sequence SS. 227-228 provides a ligand contact to ATP; sequence SS. Residues arginine 300 and 313–318 each bind ATP; that span reads VLTLSD. Position 315–318 (315–318) interacts with ADP; sequence TLSD. 315–318 contributes to the AMP binding site; the sequence is TLSD.

The protein belongs to the 5'-AMP-activated protein kinase gamma subunit family. AMPK is a heterotrimer of an alpha catalytic subunit, a beta and a gamma non-catalytic subunits.

Its subcellular location is the nucleus. It is found in the cytoplasm. Functionally, adenine nucleotides-binding subunit gamma of AMP-activated protein kinase (AMPK), an energy sensor protein kinase that plays a key role in regulating cellular energy metabolism. In response to reduction of intracellular ATP levels, AMPK activates energy-producing pathways and inhibits energy-consuming processes: inhibits protein, carbohydrate and lipid biosynthesis, as well as cell growth and proliferation. AMPK acts via direct phosphorylation of metabolic enzymes, and by longer-term effects via phosphorylation of transcription regulators. Gamma non-catalytic subunit mediates binding to AMP, ADP and ATP, leading to activate or inhibit AMPK: AMP-binding results in allosteric activation of alpha catalytic subunit (SNF1) both by inducing phosphorylation and preventing dephosphorylation of catalytic subunits. The polypeptide is 5'-AMP-activated protein kinase subunit gamma (SNF4) (Kluyveromyces lactis (strain ATCC 8585 / CBS 2359 / DSM 70799 / NBRC 1267 / NRRL Y-1140 / WM37) (Yeast)).